The primary structure comprises 451 residues: MKQVKELIGKRVLVLGMAKSGVASALLLARIGAEVVINDSKSRADQPQAGELEAAGIQVVCGGHPLTVLDGCSLLVKNPGIPYTNIVVKEAEARGIPIWTEIELAYLISEAEMVAITGSNGKTTTTTLVKEMLEHSGRKPLIAGNIGTVASEVAQKAKAEHVIVLEVSSFQLMGTNAFQPKVAVWLNIFDAHLDYHGTREDYIAAKARIAANMGPADYLVYNADDPTVVQAIARIGATLVPFSRINVVEDGAYVKDGTIFFKDEPILALADAVLPGAHNVENMLAATAAARLAGATVEQIRHVLSHFPGVKHRLQYVGSWEGRQFYNDSKATNILATKAALSGFAKPVVLIAGGLDRGNDFDELLASLKYVKAVVAYGETKSKLLALAAKANVQAVTAERVQDATEKAVALSQPGDVVLLSPACASWDQYRSFEERGDEFLDYVNTIIKPS.

118–124 is a binding site for ATP; that stretch reads GSNGKTT.

The protein belongs to the MurCDEF family.

Its subcellular location is the cytoplasm. It carries out the reaction UDP-N-acetyl-alpha-D-muramoyl-L-alanine + D-glutamate + ATP = UDP-N-acetyl-alpha-D-muramoyl-L-alanyl-D-glutamate + ADP + phosphate + H(+). It participates in cell wall biogenesis; peptidoglycan biosynthesis. Its function is as follows. Cell wall formation. Catalyzes the addition of glutamate to the nucleotide precursor UDP-N-acetylmuramoyl-L-alanine (UMA). This is UDP-N-acetylmuramoylalanine--D-glutamate ligase from Shouchella clausii (strain KSM-K16) (Alkalihalobacillus clausii).